The following is a 348-amino-acid chain: Papaya proteinase 4 (348 aa).

The N-terminal stretch at 1–18 (MAIICSFSKLLFVAICLF) is a signal peptide. Residues 19–132 (GHMSLSYCDF…EEFVNEDIVD (114 aa)) constitute a propeptide, activation peptide. Intrachain disulfides connect C154/C195, C188/C227, and C285/C336. C157 is an active-site residue. Residues H291 and N311 contribute to the active site.

This sequence belongs to the peptidase C1 family.

The catalysed reaction is Preferential cleavage: Gly-|-Xaa, in proteins and in small molecule substrates.. With respect to regulation, not inhibited by cystatin. Functionally, thiol protease with a substrate specificity very different from the other thiol proteases. In Carica papaya (Papaya), this protein is Papaya proteinase 4.